Consider the following 374-residue polypeptide: WAT1-related protein At1g60050 (374 aa).

A run of 10 helical transmembrane segments spans residues 11 to 31 (IVPF…TILA), 42 to 62 (FVFI…YSFY), 82 to 102 (IFLL…LGLS), 107 to 127 (IVVC…SLAL), 145 to 165 (IGTL…GPFI), 194 to 214 (WALG…WNII), 228 to 248 (VVSA…AFME), 255 to 275 (ELKL…GSII), 292 to 312 (VPLF…SFFV), and 315 to 335 (LHYG…LIMW). Residues 26–155 (ALTILAKTAL…GTLICFTGAF (130 aa)) form the EamA domain.

It belongs to the drug/metabolite transporter (DMT) superfamily. Plant drug/metabolite exporter (P-DME) (TC 2.A.7.4) family.

The protein resides in the membrane. The protein is WAT1-related protein At1g60050 of Arabidopsis thaliana (Mouse-ear cress).